Here is a 201-residue protein sequence, read N- to C-terminus: Small ribosomal subunit protein uS4c (201 aa).

The interval 14–43 is disordered; sequence RLGALPGLTSKRPRAGSDLRNQSRPGKKSQ. Residues 89–169 enclose the S4 RNA-binding domain; sequence MRLDNILFRL…LPKHLTFHTL (81 aa).

This sequence belongs to the universal ribosomal protein uS4 family. As to quaternary structure, part of the 30S ribosomal subunit. Contacts protein S5. The interaction surface between S4 and S5 is involved in control of translational fidelity.

It localises to the plastid. The protein localises to the chloroplast. Functionally, one of the primary rRNA binding proteins, it binds directly to 16S rRNA where it nucleates assembly of the body of the 30S subunit. With S5 and S12 plays an important role in translational accuracy. The sequence is that of Small ribosomal subunit protein uS4c (rps4) from Gossypium hirsutum (Upland cotton).